The sequence spans 111 residues: Putative lipid-binding protein AIR1 (111 aa).

The first 23 residues, 1–23 (MAPRTPLALFVSLNLLFFTYTSA), serve as a signal peptide directing secretion. 3 disulfides stabilise this stretch: Cys-28–Cys-58, Cys-38–Cys-57, and Cys-74–Cys-110.

The protein belongs to the plant LTP family. PEARLI1 subfamily.

Its subcellular location is the secreted. In Arabidopsis thaliana (Mouse-ear cress), this protein is Putative lipid-binding protein AIR1 (AIR1).